The chain runs to 365 residues: Peptide chain release factor 2 (365 aa).

Position 252 is an N5-methylglutamine (glutamine 252).

Belongs to the prokaryotic/mitochondrial release factor family. Methylated by PrmC. Methylation increases the termination efficiency of RF2.

Its subcellular location is the cytoplasm. Functionally, peptide chain release factor 2 directs the termination of translation in response to the peptide chain termination codons UGA and UAA. The sequence is that of Peptide chain release factor 2 (prfB) from Haemophilus influenzae (strain ATCC 51907 / DSM 11121 / KW20 / Rd).